The sequence spans 394 residues: WAT1-related protein At2g40900 (394 aa).

10 consecutive transmembrane segments (helical) span residues 13-33 (FAMVCLQFGYAGMNLVTKTVL), 40-60 (YVLVAYRNAFATAAIAPFALL), 67-87 (SKMTFPIFMRIFLLALLGPVI), 102-122 (TFSSAVSNIVPAITIILATLF), 142-162 (LVTVVGSILMIFYKGPFINFF), 180-200 (AAVFLLLASLSWASFFVLQAA), 209-229 (LSMSTMVCFMGTLQSLALAFV), 245-265 (LLASAYAGIMSSSIAYYVQGL), 273-293 (VFVTAFNPLIVVIVSIMSFFV), and 298-318 (IYLGGVIGVVVLMVGVYAVLW). 2 consecutive EamA domains span residues 22–147 (YAGM…TVVG) and 189–317 (LSWA…YAVL).

This sequence belongs to the drug/metabolite transporter (DMT) superfamily. Plant drug/metabolite exporter (P-DME) (TC 2.A.7.4) family.

Its subcellular location is the membrane. This Arabidopsis thaliana (Mouse-ear cress) protein is WAT1-related protein At2g40900.